Here is a 330-residue protein sequence, read N- to C-terminus: Small ribosomal subunit protein mS35 (330 aa).

Residues 50-73 form a disordered region; the sequence is AAGKGVRGQMKPRRQAGEPRTERM. Over residues 64–73 the composition is skewed to basic and acidic residues; the sequence is QAGEPRTERM.

The protein belongs to the mitochondrion-specific ribosomal protein mS35 family. Component of the mitochondrial ribosome small subunit (28S) which comprises a 12S rRNA and about 30 distinct proteins.

Its subcellular location is the mitochondrion. This is Small ribosomal subunit protein mS35 (mrps35) from Danio rerio (Zebrafish).